A 768-amino-acid polypeptide reads, in one-letter code: Ribonucleoside-diphosphate reductase large chain (768 aa).

Residues S7–K8 and E13–L19 contribute to the ATP site. 2 residues coordinate GDP: T196 and S211. C212 and C437 are disulfide-bonded. DTTP-binding positions include D220–I222, K237, and R250. N420 is a binding site for GDP. N420 acts as the Proton acceptor in catalysis. C422 functions as the Cysteine radical intermediate in the catalytic mechanism. E424 serves as a coordination point for GDP. Residue E424 is the Proton acceptor of the active site.

This sequence belongs to the ribonucleoside diphosphate reductase large chain family. In terms of assembly, heterodimer of a large and a small subunit.

It catalyses the reaction a 2'-deoxyribonucleoside 5'-diphosphate + [thioredoxin]-disulfide + H2O = a ribonucleoside 5'-diphosphate + [thioredoxin]-dithiol. With respect to regulation, under complex allosteric control mediated by deoxynucleoside triphosphates and ATP binding to separate specificity and activation sites on the large subunit. The type of nucleotide bound at the specificity site determines substrate preference. It seems probable that ATP makes the enzyme reduce CDP and UDP, dGTP favors ADP reduction and dTTP favors GDP reduction. Stimulated by ATP and inhibited by dATP binding to the activity site. Provides the precursors necessary for DNA synthesis. Catalyzes the biosynthesis of deoxyribonucleotides from the corresponding ribonucleotides. The polypeptide is Ribonucleoside-diphosphate reductase large chain (Encephalitozoon cuniculi (strain GB-M1) (Microsporidian parasite)).